A 572-amino-acid polypeptide reads, in one-letter code: NADP-dependent malic enzyme (572 aa).

Residue M1 is modified to N-acetylmethionine. Y102 (proton donor) is an active-site residue. R155 lines the NADP(+) pocket. Residue K173 is the Proton acceptor of the active site. 3 residues coordinate a divalent metal cation: E245, D246, and D269. Residues D269 and 301–318 (GAGE…MAME) contribute to the NADP(+) site. Position 336 is a phosphoserine (S336).

The protein belongs to the malic enzymes family. In terms of assembly, homotetramer. Requires Mg(2+) as cofactor. It depends on Mn(2+) as a cofactor.

The protein resides in the cytoplasm. It carries out the reaction (S)-malate + NADP(+) = pyruvate + CO2 + NADPH. The catalysed reaction is oxaloacetate + H(+) = pyruvate + CO2. In terms of biological role, catalyzes the oxidative decarboxylation of (S)-malate in the presence of NADP(+) and divalent metal ions, and decarboxylation of oxaloacetate. This is NADP-dependent malic enzyme (Me1) from Mus musculus (Mouse).